Reading from the N-terminus, the 396-residue chain is MTEHNIRNFSINFGPQHPAAHGVLRLVLELDGEVVERVDPHIGLLHRGTEKLIEHKTYLQATPYFDRLDYVAPMNQEHAFCLAIERLAGIEVPRRAQLIRTLFCEIGRLLSHLLNVTTQAMDVGALTPPLWGFEEREKLMIFYERASGARLHANYFRPGGVHQDLPPALIDDIEAFCDPFLKVVDDLDNLVMANRIFKQRNVDIGIVSVDEAMAWGFSGVMVRGSGIPWDLRKSQPYELYEEMEFDIPVGKNGDTYDRQVIRMEEMRESVKIMRQCVAKLREPAGQGPIASIDGKFAPPPRREMKRSMEALIHHFKLYTEGFHVPEGEVYAAVEAPKGEFGVYLVSDGTNKPYRCKIRAPGFAHLQAMDWMCRGHLLADVSCVLGTLDIVFGEVDR.

The protein belongs to the complex I 49 kDa subunit family. As to quaternary structure, NDH-1 is composed of 14 different subunits. Subunits NuoB, C, D, E, F, and G constitute the peripheral sector of the complex.

Its subcellular location is the cell inner membrane. The catalysed reaction is a quinone + NADH + 5 H(+)(in) = a quinol + NAD(+) + 4 H(+)(out). NDH-1 shuttles electrons from NADH, via FMN and iron-sulfur (Fe-S) centers, to quinones in the respiratory chain. The immediate electron acceptor for the enzyme in this species is believed to be ubiquinone. Couples the redox reaction to proton translocation (for every two electrons transferred, four hydrogen ions are translocated across the cytoplasmic membrane), and thus conserves the redox energy in a proton gradient. This chain is NADH-quinone oxidoreductase subunit D, found in Methylorubrum extorquens (strain PA1) (Methylobacterium extorquens).